Reading from the N-terminus, the 431-residue chain is Mannan endo-1,4-beta-mannosidase 7 (431 aa).

A signal peptide spans 1–25; it reads MKLLALFPFLAIVIQLSCWELGTDA. Substrate is bound by residues tryptophan 87 and asparagine 202. Glutamate 203 (proton donor) is an active-site residue. Tyrosine 280 lines the substrate pocket. Catalysis depends on glutamate 320, which acts as the Nucleophile. Position 362 (tryptophan 362) interacts with substrate.

Belongs to the glycosyl hydrolase 5 (cellulase A) family. Expressed in stems, flowers, siliques and seeds. Expressed in root vasculature, leaf hydathodes, anther filaments, stigma, sepal vasculature, at the base and apical parts of siliques, and replum. Expressed in the micropylar endosperm and radicle tip in early germinating seeds.

The protein resides in the secreted. The catalysed reaction is Random hydrolysis of (1-&gt;4)-beta-D-mannosidic linkages in mannans, galactomannans and glucomannans.. Its function is as follows. Required for both, loosening of the micropylar endosperm, and rupture of the seed coat in germinating seeds. May participate in the hydrolysis of the mannans in the cell wall of germinating seeds. The chain is Mannan endo-1,4-beta-mannosidase 7 (MAN7) from Arabidopsis thaliana (Mouse-ear cress).